We begin with the raw amino-acid sequence, 1064 residues long: Serine protease inhibitor Kazal-type 5 (1064 aa).

The signal sequence occupies residues 1 to 22 (MKIATVSVLLPLALCLIQDAAS). The Kazal-like 1; atypical domain maps to 28 to 66 (EMCHEFQAFMKNGKLFCPQDKKFFQSLDGIMFINKCATC). 21 disulfide bridges follow: Cys-30–Cys-66, Cys-44–Cys-63, Cys-97–Cys-133, Cys-111–Cys-130, Cys-119–Cys-151, Cys-161–Cys-197, Cys-175–Cys-194, Cys-225–Cys-261, Cys-239–Cys-258, Cys-297–Cys-333, Cys-311–Cys-330, Cys-367–Cys-403, Cys-381–Cys-400, Cys-437–Cys-473, Cys-451–Cys-470, Cys-496–Cys-532, Cys-510–Cys-529, Cys-567–Cys-603, Cys-581–Cys-600, Cys-632–Cys-668, and Cys-646–Cys-665. 14 consecutive Kazal-like domains span residues 91–153 (APTE…ECKS), 155–216 (NPEQ…ETRI), 219–285 (NAEK…KAEE), 291–352 (REIV…ARAR), 361–423 (TSYA…KSRN), 431–489 (ASFE…KAKR), 490–551 (EAAK…EEKG), 561–622 (EAVQ…PRAK), 626–688 (EAEK…EDQR), 701–757 (GNTQ…KNEY), 768–830 (ESGK…EDRS), 843–905 (NDKE…EKSS), 910–971 (NNAK…EKPS), and 987–1048 (SLDS…KCEE). The segment covering 676 to 688 (NEERKRKEEEDQR) has biased composition (basic and acidic residues). The tract at residues 676 to 705 (NEERKRKEEEDQRNAAGHGSSGGGGGNTQD) is disordered. Disulfide bonds link Cys-707/Cys-743, Cys-721/Cys-740, Cys-774/Cys-810, Cys-788/Cys-807, Cys-849/Cys-885, and Cys-863/Cys-882. Residues 751-775 (AERKNEYSRSRSNGTGSESGKDTCD) are disordered. The segment at 818–849 (AAEKKKKEDEDRSNTGERSNTGERSNDKEDLC) is disordered. Positions 895–905 (ERKKKDEEKSS) are enriched in basic and acidic residues. Residues 895-915 (ERKKKDEEKSSSKPSNNAKDE) form a disordered region. 2 disulfide bridges follow: Cys-916–Cys-952 and Cys-930–Cys-949. A compositionally biased stretch (basic and acidic residues) spans 967 to 977 (QEKPSHVRASQ). Positions 967-987 (QEKPSHVRASQEEDSPDSFSS) are disordered. 3 cysteine pairs are disulfide-bonded: Cys-993-Cys-1028, Cys-1006-Cys-1025, and Cys-1014-Cys-1046. The segment at 1041–1064 (RSTGKCEESSTPGTTAASMPPSDE) is disordered.

Proteolytically processed by furin in individual domains (D1, D5, D6, D8 through D11, and D9 through D15) exhibiting various inhibitory potentials for multiple proteases. As to expression, highly expressed in the thymus and stratum corneum. Also found in the oral mucosa, parathyroid gland, Bartholin's glands, tonsils, and vaginal epithelium. Very low levels are detected in lung, kidney, and prostate.

It is found in the secreted. Functionally, serine protease inhibitor, probably important for the anti-inflammatory and/or antimicrobial protection of mucous epithelia. Contribute to the integrity and protective barrier function of the skin by regulating the activity of defense-activating and desquamation-involved proteases. Inhibits KLK5, it's major target, in a pH-dependent manner. Inhibits KLK7, KLK14 CASP14, and trypsin. The chain is Serine protease inhibitor Kazal-type 5 (SPINK5) from Homo sapiens (Human).